Here is a 253-residue protein sequence, read N- to C-terminus: Aminoglycoside nucleotidyltransferase (4') (253 aa).

The tract at residues 1–127 is N-terminal domain; sequence MNGPIIMTRE…KVYQTAKSVE (127 aa). ATP is bound by residues serine 39, arginine 42, serine 49, aspartate 50, and glutamate 52. Residues aspartate 50 and glutamate 52 each contribute to the Mg(2+) site. Positions 52 and 67 each coordinate neomycin B. Kanamycin A-binding residues include glutamate 67, lysine 74, glutamate 76, glutamate 141, and glutamate 145. Residues 128-241 form a C-terminal domain region; that stretch reads AQTFHDAICA…NGIQEWTERH (114 aa). Glutamate 145, lysine 149, and threonine 187 together coordinate ATP. Glutamate 145 is a binding site for Mg(2+). Residue glutamate 145 is the Proton acceptor of the active site.

As to quaternary structure, homodimer. Requires Mg(2+) as cofactor.

The catalysed reaction is amikacin + ATP = 4'-adenylylamikacin + diphosphate. It carries out the reaction kanamycin A + ATP = 4'-adenylylkanamycin A + diphosphate. It catalyses the reaction neomycin B + ATP = 4'-adenylylneomycin B + diphosphate. The enzyme catalyses paromomycin + ATP = 4'-adenylylparomomycin + diphosphate. The catalysed reaction is ribostamycin + ATP = 4'-adenylylribostamycin + diphosphate. It carries out the reaction tobramycin + ATP = 4'-adenylyltobramycin + diphosphate. It catalyses the reaction kanamycin A + CTP = 4'-cytidylylkanamycin A + diphosphate. The enzyme catalyses kanamycin A + GTP = 4'-guanylylkanamycin A + diphosphate. The catalysed reaction is kanamycin A + ITP = 4'-inosinylylkanamycin A + diphosphate. It carries out the reaction dTTP + kanamycin A = 4'-thymidylylkanamycin A + diphosphate. It catalyses the reaction kanamycin A + UTP = 4'-uridylylkanamycin A + diphosphate. The enzyme catalyses kanamycin A + dATP = 4'-(2'-deoxyadenylyl)kanamycin A + diphosphate. The catalysed reaction is kanamycin A + dCTP = 4'-(2'-deoxycytidylyl)kanamycin A + diphosphate. It carries out the reaction kanamycin A + dGTP = 4'-(2'-deoxyguanylyl)kanamycin A + diphosphate. It catalyses the reaction dUTP + kanamycin A = 4'-(2'-deoxyuridylyl)kanamycin A + diphosphate. The enzyme catalyses amikacin + GTP = 4'-guanylylamikacin + diphosphate. The catalysed reaction is amikacin + ITP = 4'-inosinylylamikacin + diphosphate. It carries out the reaction amikacin + CTP = 4'-cytidylylamikacin + diphosphate. It catalyses the reaction amikacin + UTP = 4'-uridylylamikacin + diphosphate. The enzyme catalyses amikacin + dTTP = 4'-thymidylylamikacin + diphosphate. Its function is as follows. Inactivates aminoglycoside antibiotics such as kanamycin by catalyzing the transfer of a nucleotidyl group from a wide variety of nucleoside triphosphates ((d)ATP, (d)CTP, (d)GTP, ITP, TTP and (d)UTP) to the 4'-hydroxyl group of the aminoglycoside. In vitro, antibiotics without the 4'-hydroxyl but possessing a 4''-hydroxyl group (e.g. sisomicin and gentamicin) are also modifed but with poor specificity. The 3' position of the NTP ribose ring does not tolerate large substitutions (e.g. ddATP) and dNTPs and TTP are better substrates than their NTP counterparts. A short (2.35 Angstrom) hydrogen bond initially facilitates tight binding of the substrate (between Glu-52 and antibiotic) that is subsequently disrupted by the assembly of the active ternary complex. This enables the release of products post-catalysis, a 'catch and release' mechanism. This is Aminoglycoside nucleotidyltransferase (4') (knt) from Staphylococcus aureus.